The sequence spans 219 residues: Phosphatidylserine decarboxylase proenzyme (219 aa).

Residue Ser188 is the Schiff-base intermediate with substrate; via pyruvic acid of the active site. Pyruvic acid (Ser); by autocatalysis is present on Ser188.

Belongs to the phosphatidylserine decarboxylase family. PSD-A subfamily. Heterodimer of a large membrane-associated beta subunit and a small pyruvoyl-containing alpha subunit. It depends on pyruvate as a cofactor. Is synthesized initially as an inactive proenzyme. Formation of the active enzyme involves a self-maturation process in which the active site pyruvoyl group is generated from an internal serine residue via an autocatalytic post-translational modification. Two non-identical subunits are generated from the proenzyme in this reaction, and the pyruvate is formed at the N-terminus of the alpha chain, which is derived from the carboxyl end of the proenzyme. The post-translation cleavage follows an unusual pathway, termed non-hydrolytic serinolysis, in which the side chain hydroxyl group of the serine supplies its oxygen atom to form the C-terminus of the beta chain, while the remainder of the serine residue undergoes an oxidative deamination to produce ammonia and the pyruvoyl prosthetic group on the alpha chain.

Its subcellular location is the cell membrane. The catalysed reaction is a 1,2-diacyl-sn-glycero-3-phospho-L-serine + H(+) = a 1,2-diacyl-sn-glycero-3-phosphoethanolamine + CO2. The protein operates within phospholipid metabolism; phosphatidylethanolamine biosynthesis; phosphatidylethanolamine from CDP-diacylglycerol: step 2/2. Functionally, catalyzes the formation of phosphatidylethanolamine (PtdEtn) from phosphatidylserine (PtdSer). In Citrifermentans bemidjiense (strain ATCC BAA-1014 / DSM 16622 / JCM 12645 / Bem) (Geobacter bemidjiensis), this protein is Phosphatidylserine decarboxylase proenzyme.